The following is a 307-amino-acid chain: Ribonuclease Z (307 aa).

Zn(2+) is bound by residues His61, His63, Asp65, His66, His138, Asp208, and His264. Residue Asp65 is the Proton acceptor of the active site.

It belongs to the RNase Z family. In terms of assembly, homodimer. The cofactor is Zn(2+).

It carries out the reaction Endonucleolytic cleavage of RNA, removing extra 3' nucleotides from tRNA precursor, generating 3' termini of tRNAs. A 3'-hydroxy group is left at the tRNA terminus and a 5'-phosphoryl group is left at the trailer molecule.. Zinc phosphodiesterase, which displays some tRNA 3'-processing endonuclease activity. Probably involved in tRNA maturation, by removing a 3'-trailer from precursor tRNA. The chain is Ribonuclease Z from Pyrococcus abyssi (strain GE5 / Orsay).